The following is a 255-amino-acid chain: Ribonuclease HII (255 aa).

An RNase H type-2 domain is found at 73-255 (LYIGGIDEAG…HRKSFLKNIL (183 aa)). The a divalent metal cation site is built by D79, E80, and D171.

Belongs to the RNase HII family. It depends on Mn(2+) as a cofactor. Mg(2+) is required as a cofactor.

It localises to the cytoplasm. The catalysed reaction is Endonucleolytic cleavage to 5'-phosphomonoester.. In terms of biological role, endonuclease that specifically degrades the RNA of RNA-DNA hybrids. In Clostridioides difficile (strain 630) (Peptoclostridium difficile), this protein is Ribonuclease HII.